The primary structure comprises 66 residues: Large ribosomal subunit protein uL29 (66 aa).

Belongs to the universal ribosomal protein uL29 family.

The sequence is that of Large ribosomal subunit protein uL29 from Fervidobacterium nodosum (strain ATCC 35602 / DSM 5306 / Rt17-B1).